Reading from the N-terminus, the 365-residue chain is Chorismate synthase (365 aa).

Residues Met41–Arg60 are disordered. The NADP(+) site is built by Arg48 and Arg54. Residues Arg125–Ser127, Asn238–Ala239, Gly278, Lys293–Ser297, and Arg319 contribute to the FMN site.

It belongs to the chorismate synthase family. Homotetramer. It depends on FMNH2 as a cofactor.

It carries out the reaction 5-O-(1-carboxyvinyl)-3-phosphoshikimate = chorismate + phosphate. It participates in metabolic intermediate biosynthesis; chorismate biosynthesis; chorismate from D-erythrose 4-phosphate and phosphoenolpyruvate: step 7/7. Its function is as follows. Catalyzes the anti-1,4-elimination of the C-3 phosphate and the C-6 proR hydrogen from 5-enolpyruvylshikimate-3-phosphate (EPSP) to yield chorismate, which is the branch point compound that serves as the starting substrate for the three terminal pathways of aromatic amino acid biosynthesis. This reaction introduces a second double bond into the aromatic ring system. This is Chorismate synthase from Shewanella amazonensis (strain ATCC BAA-1098 / SB2B).